The chain runs to 214 residues: Small ribosomal subunit protein eS1 (214 aa).

Belongs to the eukaryotic ribosomal protein eS1 family.

This Aeropyrum pernix (strain ATCC 700893 / DSM 11879 / JCM 9820 / NBRC 100138 / K1) protein is Small ribosomal subunit protein eS1.